The primary structure comprises 710 residues: E3 ubiquitin-protein ligase TRIM9 (710 aa).

The RING-type zinc-finger motif lies at 10–50; the sequence is CPVCGSFYREPIILPCSHNLCQACARNILVQTPESESPQSH. Threonine 41 is subject to Phosphothreonine. Phosphoserine occurs at positions 44, 46, and 49. B box-type zinc fingers lie at residues 163–212 and 224–266; these read AAAL…LVPP and RKVS…VKAL. Positions 168, 171, 193, 198, 229, 232, 252, and 258 each coordinate Zn(2+). Positions 273–340 form a coiled coil; it reads HKSQLSQALN…KAQLLARVNK (68 aa). One can recognise a COS domain in the interval 374–432; the sequence is IKENDPSGFLQISDALIRRVHLTEDQWGKGTLTPRMTTDFDLSLDNSPLLQSIHQLDFV. Residues 440 to 535 enclose the Fibronectin type-III domain; the sequence is VPATPILQLE…KTLVLQTSEV (96 aa). Residues 533-702 enclose the B30.2/SPRY domain; sequence SEVAWFAFDP…LHTGLPVPDF (170 aa).

Belongs to the TRIM/RBCC family. As to quaternary structure, interacts with SNAP25. In terms of processing, auto-ubiquitinated. Poly-ubiquitinated in cultured cells, whereas it is monoubiquitinated in vitro. Brain. Highly expressed in the cerebral cortex (at protein level). Severely decreased in the affected brain areas in Parkinson disease and dementia with Lewy bodies.

Its subcellular location is the cytoplasm. It is found in the cell projection. The protein resides in the dendrite. It localises to the cytoplasmic vesicle. The protein localises to the secretory vesicle. Its subcellular location is the synaptic vesicle. It is found in the synapse. The protein resides in the cytoskeleton. The enzyme catalyses S-ubiquitinyl-[E2 ubiquitin-conjugating enzyme]-L-cysteine + [acceptor protein]-L-lysine = [E2 ubiquitin-conjugating enzyme]-L-cysteine + N(6)-ubiquitinyl-[acceptor protein]-L-lysine.. The protein operates within protein modification; protein ubiquitination. E3 ubiquitin-protein ligase which ubiquitinates itself in cooperation with an E2 enzyme UBE2D2/UBC4 and serves as a targeting signal for proteasomal degradation. May play a role in regulation of neuronal functions and may also participate in the formation or breakdown of abnormal inclusions in neurodegenerative disorders. May act as a regulator of synaptic vesicle exocytosis by controlling the availability of SNAP25 for the SNARE complex formation. In Homo sapiens (Human), this protein is E3 ubiquitin-protein ligase TRIM9 (TRIM9).